The chain runs to 394 residues: L-lactate dehydrogenase (394 aa).

An FMN hydroxy acid dehydrogenase domain is found at 1 to 380 (MIISAASDYR…SRDSLVQNAE (380 aa)). Tyr24 is a binding site for substrate. Ser106 and Gln127 together coordinate FMN. Tyr129 contacts substrate. Residue Thr155 coordinates FMN. Substrate is bound at residue Arg164. FMN is bound at residue Lys251. The active-site Proton acceptor is His275. Arg278 is a substrate binding site. 306-330 (DSGIRNGLDVVRMIALGADSVLLGR) is a binding site for FMN.

Belongs to the FMN-dependent alpha-hydroxy acid dehydrogenase family. It depends on FMN as a cofactor.

It is found in the cell inner membrane. The enzyme catalyses (S)-lactate + A = pyruvate + AH2. Its function is as follows. Catalyzes the conversion of L-lactate to pyruvate. Is coupled to the respiratory chain. The protein is L-lactate dehydrogenase of Klebsiella pneumoniae subsp. pneumoniae (strain ATCC 700721 / MGH 78578).